The sequence spans 164 residues: Nitric oxide synthase, inducible (164 aa).

Phe-3 contributes to the (6R)-L-erythro-5,6,7,8-tetrahydrobiopterin binding site. Tyr-18 provides a ligand contact to heme b. Residues 42-62 (FKGLIRAVLFSQTLIKSALAK) form a calmodulin-binding region. The Flavodoxin-like domain maps to 66–164 (CTVLYATETG…SRMYPHFCAF (99 aa)). Residues Thr-72, Glu-73, Thr-74, Lys-76, Ser-77, Ser-118, Thr-119, Ser-155, and Cys-162 each coordinate FMN.

Belongs to the NOS family. Homodimer. It depends on heme b as a cofactor. FAD is required as a cofactor. FMN serves as cofactor. The cofactor is (6R)-L-erythro-5,6,7,8-tetrahydrobiopterin.

It is found in the cytoplasm. Its subcellular location is the cytosol. The catalysed reaction is 2 L-arginine + 3 NADPH + 4 O2 + H(+) = 2 L-citrulline + 2 nitric oxide + 3 NADP(+) + 4 H2O. Not stimulated by calcium/calmodulin. In terms of biological role, produces nitric oxide (NO) which is a messenger molecule with diverse functions throughout the body. In macrophages, NO mediates tumoricidal and bactericidal actions. Also has nitrosylase activity and mediates cysteine S-nitrosylation of cytoplasmic target proteins such COX2. In Carassius auratus (Goldfish), this protein is Nitric oxide synthase, inducible (nos2).